Here is a 336-residue protein sequence, read N- to C-terminus: Phosphate acyltransferase (336 aa).

It belongs to the PlsX family. As to quaternary structure, homodimer. Probably interacts with PlsY.

The protein localises to the cytoplasm. The catalysed reaction is a fatty acyl-[ACP] + phosphate = an acyl phosphate + holo-[ACP]. Its pathway is lipid metabolism; phospholipid metabolism. Functionally, catalyzes the reversible formation of acyl-phosphate (acyl-PO(4)) from acyl-[acyl-carrier-protein] (acyl-ACP). This enzyme utilizes acyl-ACP as fatty acyl donor, but not acyl-CoA. This is Phosphate acyltransferase from Pseudomonas paraeruginosa (strain DSM 24068 / PA7) (Pseudomonas aeruginosa (strain PA7)).